A 342-amino-acid chain; its full sequence is Transmembrane protein 115 homolog (342 aa).

Residues 1 to 21 (MQYSSRFLELNIPDSFLNINK) are Cytoplasmic-facing. A helical transmembrane segment spans residues 22–42 (IPDATKFITVTYICLTATLFC). At 43-121 (IRRSLYNKLV…NWNSSKEMFK (79 aa)) the chain is on the lumenal side. An N-linked (GlcNAc...) asparagine glycan is attached at Asn-114. A helical membrane pass occupies residues 122–142 (FIIVLGSLTNVLIIMLTLLVS). At 143–159 (FFSNKVRLDIPLDGNYT) the chain is on the cytoplasmic side. Residues 160–180 (ILIGFPIIYRQLLPETTIIHL) traverse the membrane as a helical segment. Residues 181–207 (KTPQFLAKNFRFKLLPIFVMFTMTVTQ) are Lumenal-facing. A helical membrane pass occupies residues 208–228 (IIWFHHFAQLFSIWVTFFASW). Over 229–342 (SYLRFFQKLA…QVLEERMVNP (114 aa)) the chain is Cytoplasmic.

The protein belongs to the TMEM115 family. Homooligomer.

It localises to the golgi apparatus membrane. In terms of biological role, may play a role in retrograde transport of proteins from the Golgi to the endoplasmic reticulum. The chain is Transmembrane protein 115 homolog from Saccharomyces cerevisiae (strain ATCC 204508 / S288c) (Baker's yeast).